The primary structure comprises 274 residues: Thiamine kinase (274 aa).

This sequence belongs to the thiamine kinase family.

It catalyses the reaction thiamine + ATP = thiamine phosphate + ADP + H(+). Its pathway is cofactor biosynthesis; thiamine diphosphate biosynthesis; thiamine phosphate from thiamine: step 1/1. Catalyzes the ATP-dependent phosphorylation of thiamine to thiamine phosphate. Is involved in thiamine salvage. The sequence is that of Thiamine kinase from Shigella dysenteriae serotype 1 (strain Sd197).